The chain runs to 153 residues: MERRQRGFTLLEIMVVIVILGVLASLVVPNLMGNKEKADKQKAVSDIVALESQLDMYKLDNSRYPTTEQGLGALVKKPTTPPEPRNYPQDGYIRRLPQDPWGAEYQLVSPGRHGKIDVFSYGPDGMPDTDDDIGNWNVGNGAHNNGGNGNGNP.

Residues 1-7 constitute a propeptide, leader sequence; it reads MERRQRG. An N-methylphenylalanine modification is found at Phe8. A helical transmembrane segment spans residues 8-28; sequence FTLLEIMVVIVILGVLASLVV. Disordered stretches follow at residues 68-91 and 126-153; these read EQGLGALVKKPTTPPEPRNYPQDG and MPDTDDDIGNWNVGNGAHNNGGNGNGNP. Positions 134–143 are enriched in low complexity; it reads GNWNVGNGAH. A compositionally biased stretch (gly residues) spans 144 to 153; sequence NNGGNGNGNP.

The protein belongs to the GSP G family. As to quaternary structure, type II secretion system is composed of four main components: the outer membrane complex, the inner membrane complex, the cytoplasmic secretion ATPase and the periplasm-spanning pseudopilus. Forms homomultimers. Cleaved by the prepilin peptidase. In terms of processing, methylated by prepilin peptidase at the amino group of the N-terminal phenylalanine once the leader sequence is cleaved.

It is found in the cell inner membrane. In terms of biological role, core component of the type II secretion system required for the energy-dependent secretion of extracellular factors such as proteases and toxins from the periplasm. Pseudopilin (pilin-like) protein that polymerizes to form the pseudopilus. Further polymerization triggers pseudopilus growth. In Dickeya chrysanthemi (Pectobacterium chrysanthemi), this protein is Type II secretion system core protein G (outG).